The primary structure comprises 99 residues: Ferredoxin (99 aa).

One can recognise a 2Fe-2S ferredoxin-type domain in the interval 4–96; the sequence is YKIHLLCEEE…DCTISTHVEQ (93 aa). [2Fe-2S] cluster-binding residues include cysteine 42, cysteine 47, cysteine 50, and cysteine 80.

This sequence belongs to the 2Fe2S plant-type ferredoxin family. In terms of assembly, forms a complex with heterodimeric ferredoxin-thioredoxin reductase (FTR) and thioredoxin. The cofactor is [2Fe-2S] cluster.

The protein resides in the plastid. The protein localises to the chloroplast. Functionally, ferredoxins are iron-sulfur proteins that transfer electrons in a wide variety of metabolic reactions. This chain is Ferredoxin (petF), found in Pyropia yezoensis (Susabi-nori).